Reading from the N-terminus, the 227-residue chain is tRNA (guanine-N(1)-)-methyltransferase (227 aa).

S-adenosyl-L-methionine contacts are provided by residues G112 and 131–136 (LGDFVL).

The protein belongs to the RNA methyltransferase TrmD family. In terms of assembly, homodimer.

Its subcellular location is the cytoplasm. It carries out the reaction guanosine(37) in tRNA + S-adenosyl-L-methionine = N(1)-methylguanosine(37) in tRNA + S-adenosyl-L-homocysteine + H(+). Its function is as follows. Specifically methylates guanosine-37 in various tRNAs. The polypeptide is tRNA (guanine-N(1)-)-methyltransferase (Trichodesmium erythraeum (strain IMS101)).